We begin with the raw amino-acid sequence, 338 residues long: Glyceraldehyde-3-phosphate dehydrogenase, cytosolic (338 aa).

NAD(+) contacts are provided by residues 14–15, Asp36, and Arg83; that span reads RI. D-glyceraldehyde 3-phosphate is bound by residues 154-156, Thr185, 214-215, and Arg237; these read SCT and TG. The active-site Nucleophile is the Cys155. Asn319 serves as a coordination point for NAD(+).

Belongs to the glyceraldehyde-3-phosphate dehydrogenase family. In terms of assembly, homotetramer.

It localises to the cytoplasm. The catalysed reaction is D-glyceraldehyde 3-phosphate + phosphate + NAD(+) = (2R)-3-phospho-glyceroyl phosphate + NADH + H(+). It participates in carbohydrate degradation; glycolysis; pyruvate from D-glyceraldehyde 3-phosphate: step 1/5. Key enzyme in glycolysis that catalyzes the first step of the pathway by converting D-glyceraldehyde 3-phosphate (G3P) into 3-phospho-D-glyceroyl phosphate. Essential for the maintenance of cellular ATP levels and carbohydrate metabolism. This chain is Glyceraldehyde-3-phosphate dehydrogenase, cytosolic (GAPC), found in Ranunculus acris (Meadow buttercup).